The sequence spans 70 residues: Beta-defensin 131B (70 aa).

An N-terminal signal peptide occupies residues 1-22 (MRVLFFVFGVLSLMSTVPPTRS). Cystine bridges form between cysteine 29-cysteine 56, cysteine 36-cysteine 50, and cysteine 40-cysteine 57.

It belongs to the beta-defensin family.

The protein resides in the secreted. Its function is as follows. Has antibacterial activity. This chain is Beta-defensin 131B, found in Homo sapiens (Human).